Reading from the N-terminus, the 162-residue chain is Protein hcp1 (162 aa).

The protein belongs to the hcp1 family. In terms of assembly, hexamer. Three hcp1 monomers form two closely related hexameric rings with a 40 Angstrom internal diameter.

It is found in the secreted. Required for assembly of the protein secretion apparatus HSI-I. Actively secreted during chronic infection of cystic fibrosis patients. This chain is Protein hcp1 (hcp1), found in Pseudomonas aeruginosa (strain ATCC 15692 / DSM 22644 / CIP 104116 / JCM 14847 / LMG 12228 / 1C / PRS 101 / PAO1).